Reading from the N-terminus, the 358-residue chain is Uroporphyrinogen decarboxylase (358 aa).

Substrate contacts are provided by residues 29-33, Phe48, Asp79, Tyr155, Ser210, and His330; that span reads RQAGR.

Belongs to the uroporphyrinogen decarboxylase family. As to quaternary structure, homodimer.

It localises to the cytoplasm. The enzyme catalyses uroporphyrinogen III + 4 H(+) = coproporphyrinogen III + 4 CO2. It functions in the pathway porphyrin-containing compound metabolism; protoporphyrin-IX biosynthesis; coproporphyrinogen-III from 5-aminolevulinate: step 4/4. Catalyzes the decarboxylation of four acetate groups of uroporphyrinogen-III to yield coproporphyrinogen-III. This Bordetella parapertussis (strain 12822 / ATCC BAA-587 / NCTC 13253) protein is Uroporphyrinogen decarboxylase.